Here is an 837-residue protein sequence, read N- to C-terminus: A disintegrin and metalloproteinase with thrombospondin motifs 4 (837 aa).

Positions 1–51 are cleaved as a signal peptide; sequence MSQTGSHPGRGLAGRWLWGAQPCLLLPIVPLSWLVWLLLLLLASLLPSARL. The propeptide occupies 52 to 212; sequence ASPLPREEEI…PSPRPRRAKR (161 aa). N68 carries N-linked (GlcNAc...) asparagine glycosylation. Positions 192–199 match the Cysteine switch motif; it reads PMCNVKAP. C194 provides a ligand contact to Zn(2+). The region spanning 218–428 is the Peptidase M12B domain; sequence RFVETLVVAD…GYGHCLLDKP (211 aa). 11 cysteine pairs are disulfide-bonded: C293–C345, C322–C327, C339–C423, C377–C407, C449–C472, C460–C482, C467–C501, C495–C506, C532–C569, C536–C574, and C547–C559. H361 is a binding site for Zn(2+). E362 is an active-site residue. Residues H365 and H371 each contribute to the Zn(2+) site. In terms of domain architecture, Disintegrin spans 437–519; that stretch reads TFPGKDYDAD…DQLQDFNIPQ (83 aa). Positions 520 to 575 constitute a TSP type-1 domain; sequence AGGWGPWGPWGDCSRTCGGGVQFSSRDCTRPVPRNGGKYCEGRRTRFRSCNTEDCP. The tract at residues 686-837 is spacer; that stretch reads SKQSGSFRKF…LRRRPWAGRK (152 aa).

In terms of assembly, interacts with SRPX2. The cofactor is Zn(2+). The precursor is cleaved by a furin endopeptidase. In terms of processing, glycosylated. Can be O-fucosylated by POFUT2 on a serine or a threonine residue found within the consensus sequence C1-X(2)-(S/T)-C2-G of the TSP type-1 repeat domains where C1 and C2 are the first and second cysteine residue of the repeat, respectively. Fucosylated repeats can then be further glycosylated by the addition of a beta-1,3-glucose residue by the glucosyltransferase, B3GALTL. Fucosylation mediates the efficient secretion of ADAMTS family members. Can also be C-glycosylated with one or two mannose molecules on tryptophan residues within the consensus sequence W-X-X-W of the TPRs, and N-glycosylated. These other glycosylations can also facilitate secretion. In terms of tissue distribution, expressed in brain, lung and heart. Expressed at very low level in placenta and skeletal muscles. Isoform 2: Detected in osteoarthritic synovium.

It is found in the secreted. Its subcellular location is the extracellular space. The protein resides in the extracellular matrix. The catalysed reaction is Glutamyl endopeptidase. Bonds cleaved include 370-Thr-Glu-Gly-Glu-|-Ala-Arg-Gly-Ser-377 in the interglobular domain of mammalian aggrecan.. Functionally, cleaves aggrecan, a cartilage proteoglycan, at the '392-Glu-|-Ala-393' site and may be involved in its turnover. Also cleaves COMP. May play an important role in the destruction of aggrecan in arthritic diseases. Could be a critical factor in the exacerbation of neurodegeneration in Alzheimer disease. This chain is A disintegrin and metalloproteinase with thrombospondin motifs 4 (ADAMTS4), found in Homo sapiens (Human).